Consider the following 197-residue polypeptide: Ribonuclease HII (197 aa).

The RNase H type-2 domain occupies 3 to 192 (QLIAGVDEVG…VQLSLMQRGG (190 aa)). Residues Asp9, Glu10, and Asp101 each contribute to the a divalent metal cation site.

The protein belongs to the RNase HII family. Requires Mn(2+) as cofactor. The cofactor is Mg(2+).

It localises to the cytoplasm. It carries out the reaction Endonucleolytic cleavage to 5'-phosphomonoester.. Its function is as follows. Endonuclease that specifically degrades the RNA of RNA-DNA hybrids. This chain is Ribonuclease HII, found in Pseudoalteromonas atlantica (strain T6c / ATCC BAA-1087).